Consider the following 421-residue polypeptide: Probable mitochondrial chaperone BCS1-A (421 aa).

Over 1–10 (MNHLKDQSKS) the chain is Mitochondrial intermembrane. A helical transmembrane segment spans residues 11-31 (IVLGISSGIGIFLISGGINIF). Topologically, residues 32–421 (KNVGQYILNR…VQSITPFNLN (390 aa)) are mitochondrial matrix. 228 to 235 (GEPGNGKS) provides a ligand contact to ATP.

It belongs to the AAA ATPase family. BCS1 subfamily.

It localises to the mitochondrion inner membrane. It carries out the reaction ATP + H2O = ADP + phosphate + H(+). Functionally, chaperone necessary for the assembly of mitochondrial respiratory chain complex III. The chain is Probable mitochondrial chaperone BCS1-A (bcs1la) from Dictyostelium discoideum (Social amoeba).